The following is a 558-amino-acid chain: Dihydroxy-acid dehydratase (558 aa).

Residue cysteine 51 coordinates [2Fe-2S] cluster. A Mg(2+)-binding site is contributed by aspartate 83. Cysteine 124 serves as a coordination point for [2Fe-2S] cluster. Residues aspartate 125 and lysine 126 each contribute to the Mg(2+) site. Lysine 126 is subject to N6-carboxylysine. Cysteine 196 is a [2Fe-2S] cluster binding site. Residue glutamate 447 coordinates Mg(2+). Serine 473 functions as the Proton acceptor in the catalytic mechanism.

The protein belongs to the IlvD/Edd family. Homodimer. [2Fe-2S] cluster serves as cofactor. Requires Mg(2+) as cofactor.

It carries out the reaction (2R)-2,3-dihydroxy-3-methylbutanoate = 3-methyl-2-oxobutanoate + H2O. It catalyses the reaction (2R,3R)-2,3-dihydroxy-3-methylpentanoate = (S)-3-methyl-2-oxopentanoate + H2O. The protein operates within amino-acid biosynthesis; L-isoleucine biosynthesis; L-isoleucine from 2-oxobutanoate: step 3/4. It participates in amino-acid biosynthesis; L-valine biosynthesis; L-valine from pyruvate: step 3/4. Functionally, functions in the biosynthesis of branched-chain amino acids. Catalyzes the dehydration of (2R,3R)-2,3-dihydroxy-3-methylpentanoate (2,3-dihydroxy-3-methylvalerate) into 2-oxo-3-methylpentanoate (2-oxo-3-methylvalerate) and of (2R)-2,3-dihydroxy-3-methylbutanoate (2,3-dihydroxyisovalerate) into 2-oxo-3-methylbutanoate (2-oxoisovalerate), the penultimate precursor to L-isoleucine and L-valine, respectively. The polypeptide is Dihydroxy-acid dehydratase (Flavobacterium psychrophilum (strain ATCC 49511 / DSM 21280 / CIP 103535 / JIP02/86)).